Consider the following 678-residue polypeptide: RNA helicase NPH-II (678 aa).

The region spanning 175 to 351 (FESWIHHVPV…EFFTESVFVH (177 aa)) is the Helicase ATP-binding domain. 188 to 195 (GDTGVGKT) contributes to the ATP binding site. A DEXH box motif is present at residues 300 to 303 (DEVH). The 176-residue stretch at 371 to 546 (SLNKFMYIEE…VFDLQLPEDL (176 aa)) folds into the Helicase C-terminal domain.

The protein belongs to the DEAD box helicase family. DEAH subfamily. Monomer.

The protein resides in the virion. The catalysed reaction is ATP + H2O = ADP + phosphate + H(+). Functionally, NTP-dependent helicase that catalyzes unidirectional unwinding of 3'tailed duplex RNAs and plays an important role during transcription of early mRNAs, presumably by preventing R-loop formation behind the elongating RNA polymerase. Might also play a role in the export of newly synthesized mRNA chains out of the core into the cytoplasm. Required for replication and propagation of viral particles. This is RNA helicase NPH-II (OPG084) from Oryctolagus cuniculus (Rabbit).